Consider the following 277-residue polypeptide: MHIIETQDLCHTYKGNIDALKNISFIAPRNTRIAIIGPNGAGKSTLFKHFNGVLKPTSGKVLIRGEPITKENIREVRRTVGLVFQNPDDQIFSPTVEQDVAFGPINMGLDEEAVKHRVSEALRTVGLSEYRTRVPHHLSGGEKKRVAIAGIIAMEPQVLVLDEPTAGLDPQGVREIIRFIRDFSVRYGMTVIFSTHNISLVAELAEYIYVMNNGSFVAEGTVAEIFSQPDLLSSVRLDLPILPKLISSLRSKGIAIDMGYTYQEAEIAFLKAFGKIA.

The ABC transporter domain occupies 4–238; sequence IETQDLCHTY…PDLLSSVRLD (235 aa). 37 to 44 contributes to the ATP binding site; it reads GPNGAGKS.

This sequence belongs to the ABC transporter superfamily. Energy-coupling factor EcfA family. As to quaternary structure, forms a stable energy-coupling factor (ECF) transporter complex composed of 2 membrane-embedded substrate-binding proteins (S component), 2 ATP-binding proteins (A component) and 2 transmembrane proteins (T component).

The protein localises to the cell membrane. Functionally, ATP-binding (A) component of a common energy-coupling factor (ECF) ABC-transporter complex. Unlike classic ABC transporters this ECF transporter provides the energy necessary to transport a number of different substrates. This is Energy-coupling factor transporter ATP-binding protein EcfA1 from Methanospirillum hungatei JF-1 (strain ATCC 27890 / DSM 864 / NBRC 100397 / JF-1).